Reading from the N-terminus, the 187-residue chain is UPF0301 protein YqgE (187 aa).

Belongs to the UPF0301 (AlgH) family.

In Salmonella paratyphi B (strain ATCC BAA-1250 / SPB7), this protein is UPF0301 protein YqgE.